A 394-amino-acid chain; its full sequence is Chaperone protein DnaJ (394 aa).

Positions Asp-4 to Gly-68 constitute a J domain. The CR-type zinc-finger motif lies at Gly-136 to Thr-218. Zn(2+) contacts are provided by Cys-149, Cys-152, Cys-166, Cys-169, Cys-192, Cys-195, Cys-206, and Cys-209. 4 CXXCXGXG motif repeats span residues Cys-149–Gly-156, Cys-166–Gly-173, Cys-192–Gly-199, and Cys-206–Gly-213.

The protein belongs to the DnaJ family. In terms of assembly, homodimer. Requires Zn(2+) as cofactor.

The protein resides in the cytoplasm. Its function is as follows. Participates actively in the response to hyperosmotic and heat shock by preventing the aggregation of stress-denatured proteins and by disaggregating proteins, also in an autonomous, DnaK-independent fashion. Unfolded proteins bind initially to DnaJ; upon interaction with the DnaJ-bound protein, DnaK hydrolyzes its bound ATP, resulting in the formation of a stable complex. GrpE releases ADP from DnaK; ATP binding to DnaK triggers the release of the substrate protein, thus completing the reaction cycle. Several rounds of ATP-dependent interactions between DnaJ, DnaK and GrpE are required for fully efficient folding. Also involved, together with DnaK and GrpE, in the DNA replication of plasmids through activation of initiation proteins. This is Chaperone protein DnaJ from Synechococcus sp. (strain JA-2-3B'a(2-13)) (Cyanobacteria bacterium Yellowstone B-Prime).